The primary structure comprises 100 residues: Cell division protein FtsB (100 aa).

Residues 1 to 3 (MKW) are Cytoplasmic-facing. A helical transmembrane segment spans residues 4–21 (LAIILVVALLALQYRLWM). The Periplasmic portion of the chain corresponds to 22-100 (GEGSIASVVS…TDKDTKKNKK (79 aa)). The stretch at 26-73 (IASVVSLNREIAKQKEENARLRERNRLLAAEVDALKQGKDAIEERARN) forms a coiled coil.

It belongs to the FtsB family. As to quaternary structure, part of a complex composed of FtsB, FtsL and FtsQ.

It is found in the cell inner membrane. Essential cell division protein. May link together the upstream cell division proteins, which are predominantly cytoplasmic, with the downstream cell division proteins, which are predominantly periplasmic. The sequence is that of Cell division protein FtsB from Saccharophagus degradans (strain 2-40 / ATCC 43961 / DSM 17024).